Consider the following 365-residue polypeptide: Validamycin A dioxygenase (365 aa).

Residues 174–284 (HATWTQSVNW…LVSLVYFFDA (111 aa)) enclose the Fe2OG dioxygenase domain. Fe cation is bound by residues H203, D205, and H261. Residues 331–365 (GELSLSRPGSADSPGSSPADDHPSRPGRHPAQGPQ) form a disordered region. Positions 336-348 (SRPGSADSPGSSP) are enriched in low complexity.

Belongs to the iron/ascorbate-dependent oxidoreductase family. It depends on Fe(2+) as a cofactor.

The catalysed reaction is validamycin A + 2-oxoglutarate + O2 = validamycin B + succinate + CO2 + H(+). It catalyses the reaction validoxylamine A + 2-oxoglutarate + O2 = validoxylamine B + succinate + CO2 + H(+). It participates in antibiotic biosynthesis. Functionally, involved in the biosynthesis of validamycin B, a component of the antifungal and antibiotic validamycin complex used as a crop protectant. Catalyzes the regioselective hydroxylation of validamycin A (4-O-beta-D-glucopyranosyl-validoxylamine A) at the C-6 position to yield validamycin B. To a lesser extent, also able to convert validoxylamine A to its hydroxylated derivative. The chain is Validamycin A dioxygenase from Streptomyces hygroscopicus subsp. limoneus.